The primary structure comprises 505 residues: Maturase K (505 aa).

The protein belongs to the intron maturase 2 family. MatK subfamily.

It is found in the plastid. The protein resides in the chloroplast. Functionally, usually encoded in the trnK tRNA gene intron. Probably assists in splicing its own and other chloroplast group II introns. In Glycine max (Soybean), this protein is Maturase K.